A 154-amino-acid chain; its full sequence is MGLSDGEWQLVLNIWGKVETDEGGHGKDVLIRLFKGHPETLEKFDKFKHLKSEDEMKASEDLKKHGITVLTALGNILKKKGHHEAELKPLAQSHATKHKIPVQFLEFISDAIIQVIQSKHAGNFGADAQAAMKKALELFRHDMAAKYKEFGFQG.

Positions 2–148 (GLSDGEWQLV…FRHDMAAKYK (147 aa)) constitute a Globin domain. Residue Ser4 is modified to Phosphoserine. His65 contributes to the nitrite binding site. Residue His65 coordinates O2. Thr68 carries the post-translational modification Phosphothreonine. Position 94 (His94) interacts with heme b.

This sequence belongs to the globin family. Monomeric.

Its subcellular location is the cytoplasm. The protein localises to the sarcoplasm. It carries out the reaction Fe(III)-heme b-[protein] + nitric oxide + H2O = Fe(II)-heme b-[protein] + nitrite + 2 H(+). It catalyses the reaction H2O2 + AH2 = A + 2 H2O. Its function is as follows. Monomeric heme protein which primary function is to store oxygen and facilitate its diffusion within muscle tissues. Reversibly binds oxygen through a pentacoordinated heme iron and enables its timely and efficient release as needed during periods of heightened demand. Depending on the oxidative conditions of tissues and cells, and in addition to its ability to bind oxygen, it also has a nitrite reductase activity whereby it regulates the production of bioactive nitric oxide. Under stress conditions, like hypoxia and anoxia, it also protects cells against reactive oxygen species thanks to its pseudoperoxidase activity. This is Myoglobin (MB) from Osphranter rufus (Red kangaroo).